A 143-amino-acid chain; its full sequence is Large ribosomal subunit protein uL13 (143 aa).

It belongs to the universal ribosomal protein uL13 family. As to quaternary structure, part of the 50S ribosomal subunit.

This protein is one of the early assembly proteins of the 50S ribosomal subunit, although it is not seen to bind rRNA by itself. It is important during the early stages of 50S assembly. In Dichelobacter nodosus (strain VCS1703A), this protein is Large ribosomal subunit protein uL13.